Here is a 442-residue protein sequence, read N- to C-terminus: tRNA-2-methylthio-N(6)-dimethylallyladenosine synthase (442 aa).

The MTTase N-terminal domain maps to 2–117; that stretch reads KSLYIKTYGC…LPELIVKASR (116 aa). Cys11, Cys47, Cys80, Cys157, Cys161, and Cys164 together coordinate [4Fe-4S] cluster. A Radical SAM core domain is found at 143-374; sequence NSQGSSAFLS…QKLINKQQLE (232 aa). In terms of domain architecture, TRAM spans 377 to 441; that stretch reads QSMVGKTIPV…QNSLLGRELQ (65 aa).

It belongs to the methylthiotransferase family. MiaB subfamily. In terms of assembly, monomer. The cofactor is [4Fe-4S] cluster.

Its subcellular location is the cytoplasm. It carries out the reaction N(6)-dimethylallyladenosine(37) in tRNA + (sulfur carrier)-SH + AH2 + 2 S-adenosyl-L-methionine = 2-methylsulfanyl-N(6)-dimethylallyladenosine(37) in tRNA + (sulfur carrier)-H + 5'-deoxyadenosine + L-methionine + A + S-adenosyl-L-homocysteine + 2 H(+). In terms of biological role, catalyzes the methylthiolation of N6-(dimethylallyl)adenosine (i(6)A), leading to the formation of 2-methylthio-N6-(dimethylallyl)adenosine (ms(2)i(6)A) at position 37 in tRNAs that read codons beginning with uridine. The polypeptide is tRNA-2-methylthio-N(6)-dimethylallyladenosine synthase (Wolbachia sp. subsp. Brugia malayi (strain TRS)).